The chain runs to 163 residues: Nucleotide-binding protein Mvan_0997 (163 aa).

Belongs to the YajQ family.

Its function is as follows. Nucleotide-binding protein. This chain is Nucleotide-binding protein Mvan_0997, found in Mycolicibacterium vanbaalenii (strain DSM 7251 / JCM 13017 / BCRC 16820 / KCTC 9966 / NRRL B-24157 / PYR-1) (Mycobacterium vanbaalenii).